The following is a 416-amino-acid chain: Squamosa promoter-binding-like protein 8 (416 aa).

The tract at residues 11–53 (SSCDDFGYNATPPPPPSLLPIMDQDGGGGSIQRDHHHHHNHQQ) is disordered. The SBP-type zinc finger occupies 182–260 (PPRCQAEGCK…ADHNRRRRKS (79 aa)). Residues Cys-185, Cys-190, Cys-207, His-210, Cys-227, Cys-230, His-234, and Cys-246 each contribute to the Zn(2+) site. The short motif at 243 to 259 (KKSCRKRLADHNRRRRK) is the Bipartite nuclear localization signal element. Residues 250–299 (LADHNRRRRKSKPSDGEHSGEKRRAQANKSAATKDKAGSSSKNAGIGDGF) are disordered. Basic and acidic residues predominate over residues 261–273 (KPSDGEHSGEKRR).

As to expression, expressed in stems, leaf sheaths, and young panicles.

It is found in the nucleus. In terms of biological role, probable transcription factor that plays an important role in building the laminar joint between leaf blade and leaf sheath boundary, thereby controlling ligule and auricle development. This chain is Squamosa promoter-binding-like protein 8 (SPL8), found in Oryza sativa subsp. indica (Rice).